The primary structure comprises 177 residues: Translation initiation factor IF-3 (177 aa).

The protein belongs to the IF-3 family. As to quaternary structure, monomer.

Its subcellular location is the cytoplasm. IF-3 binds to the 30S ribosomal subunit and shifts the equilibrium between 70S ribosomes and their 50S and 30S subunits in favor of the free subunits, thus enhancing the availability of 30S subunits on which protein synthesis initiation begins. The protein is Translation initiation factor IF-3 of Nitratiruptor sp. (strain SB155-2).